Here is a 113-residue protein sequence, read N- to C-terminus: CRISPR-associated endoribonuclease Cas2 2 (113 aa).

D32 is a Mg(2+) binding site.

Belongs to the CRISPR-associated endoribonuclease Cas2 protein family. In terms of assembly, homodimer, forms a heterotetramer with a Cas1 homodimer. Requires Mg(2+) as cofactor.

CRISPR (clustered regularly interspaced short palindromic repeat), is an adaptive immune system that provides protection against mobile genetic elements (viruses, transposable elements and conjugative plasmids). CRISPR clusters contain sequences complementary to antecedent mobile elements and target invading nucleic acids. CRISPR clusters are transcribed and processed into CRISPR RNA (crRNA). Functions as a ssRNA-specific endoribonuclease. Involved in the integration of spacer DNA into the CRISPR cassette. The protein is CRISPR-associated endoribonuclease Cas2 2 (cas22) of Nitrosomonas europaea (strain ATCC 19718 / CIP 103999 / KCTC 2705 / NBRC 14298).